The chain runs to 273 residues: SPbeta prophage-derived uncharacterized protein YomF (273 aa).

Residues 119 to 149 (VIETLQGLIDEAEDTIIRMNERIAECERVTK) adopt a coiled-coil conformation.

The sequence is that of SPbeta prophage-derived uncharacterized protein YomF (yomF) from Bacillus subtilis (strain 168).